The chain runs to 63 residues: Large ribosomal subunit protein uL29 (63 aa).

This sequence belongs to the universal ribosomal protein uL29 family.

The polypeptide is Large ribosomal subunit protein uL29 (Glaesserella parasuis serovar 5 (strain SH0165) (Haemophilus parasuis)).